The sequence spans 362 residues: Probable cinnamyl alcohol dehydrogenase 8D (362 aa).

A Zn(2+)-binding site is contributed by Cys45. Thr47 is a binding site for NADP(+). Positions 67, 68, 98, 101, 104, 112, and 161 each coordinate Zn(2+). Residues Thr165, 186-191, 209-214, Thr249, Gly273, and 296-298 each bind NADP(+); these read GLGGLG, SSSPAK, and NGV.

Belongs to the zinc-containing alcohol dehydrogenase family. In terms of assembly, homodimer. Zn(2+) is required as a cofactor.

It catalyses the reaction (E)-cinnamyl alcohol + NADP(+) = (E)-cinnamaldehyde + NADPH + H(+). It carries out the reaction (E)-coniferol + NADP(+) = (E)-coniferaldehyde + NADPH + H(+). The enzyme catalyses (E)-sinapyl alcohol + NADP(+) = (E)-sinapaldehyde + NADPH + H(+). The catalysed reaction is (E)-4-coumaroyl alcohol + NADP(+) = (E)-4-coumaraldehyde + NADPH + H(+). It catalyses the reaction (E)-caffeyl alcohol + NADP(+) = (E)-caffeyl aldehyde + NADPH + H(+). The protein operates within aromatic compound metabolism; phenylpropanoid biosynthesis. In terms of biological role, involved in lignin biosynthesis. Catalyzes the final step specific for the production of lignin monomers. Catalyzes the NADPH-dependent reduction of coniferaldehyde, 5-hydroxyconiferaldehyde, sinapaldehyde, 4-coumaraldehyde and caffeyl aldehyde to their respective alcohols. The protein is Probable cinnamyl alcohol dehydrogenase 8D of Oryza sativa subsp. japonica (Rice).